The following is a 229-amino-acid chain: 7-cyano-7-deazaguanine synthase (229 aa).

ATP is bound at residue 7-17 (LSGGLDSSTIL). 4 residues coordinate Zn(2+): C191, C199, C202, and C205.

Belongs to the QueC family. Requires Zn(2+) as cofactor.

The enzyme catalyses 7-carboxy-7-deazaguanine + NH4(+) + ATP = 7-cyano-7-deazaguanine + ADP + phosphate + H2O + H(+). The protein operates within purine metabolism; 7-cyano-7-deazaguanine biosynthesis. Catalyzes the ATP-dependent conversion of 7-carboxy-7-deazaguanine (CDG) to 7-cyano-7-deazaguanine (preQ(0)). The polypeptide is 7-cyano-7-deazaguanine synthase (Nostoc sp. (strain PCC 7120 / SAG 25.82 / UTEX 2576)).